Reading from the N-terminus, the 76-residue chain is MEKKIIFLVVLVALLALPEFISSEVIKRDIPYKKRKFPYKSECLKACAAAFTGGDESRIQEGKPGFFKCTCYYTTG.

A signal peptide spans 1–23; sequence MEKKIIFLVVLVALLALPEFISS.

This sequence belongs to the scoloptoxin-15 family. Post-translationally, contains 2 disulfide bonds. In terms of tissue distribution, expressed by the venom gland.

The protein localises to the secreted. In terms of biological role, voltage-gated calcium channel inhibitor (Cav) (8.6% block at 10 nM), when tested on DRG neurons. This is Omega-scoloptoxin(15)-Ssd3c from Scolopendra dehaani (Thai centipede).